The chain runs to 892 residues: Alanine--tRNA ligase (892 aa).

Residues histidine 596, histidine 600, cysteine 700, and histidine 704 each contribute to the Zn(2+) site.

It belongs to the class-II aminoacyl-tRNA synthetase family. Zn(2+) serves as cofactor.

Its subcellular location is the cytoplasm. The enzyme catalyses tRNA(Ala) + L-alanine + ATP = L-alanyl-tRNA(Ala) + AMP + diphosphate. Functionally, catalyzes the attachment of alanine to tRNA(Ala) in a two-step reaction: alanine is first activated by ATP to form Ala-AMP and then transferred to the acceptor end of tRNA(Ala). Also edits incorrectly charged Ser-tRNA(Ala) and Gly-tRNA(Ala) via its editing domain. This is Alanine--tRNA ligase from Methanococcus maripaludis (strain C7 / ATCC BAA-1331).